A 493-amino-acid polypeptide reads, in one-letter code: Protein dml1 (493 aa).

It belongs to the misato family.

It localises to the mitochondrion. Its function is as follows. Involved in the partitioning of the mitochondrial organelle and mitochondrial DNA (mtDNA) inheritance. The polypeptide is Protein dml1 (dml1) (Aspergillus oryzae (strain ATCC 42149 / RIB 40) (Yellow koji mold)).